We begin with the raw amino-acid sequence, 647 residues long: Leucine-rich repeat transmembrane protein FLRT3 (647 aa).

An N-terminal signal peptide occupies residues 1 to 28 (MITVPWSVFLIWTKIGLLLDMAPYSVAA). Topologically, residues 29 to 526 (KPCPSVCRCD…KEPYKNSSVP (498 aa)) are extracellular. Positions 30-62 (PCPSVCRCDVGFIYCNDRDLTSIPTGIPEDATN) constitute an LRRNT domain. Cystine bridges form between cysteine 31–cysteine 37 and cysteine 35–cysteine 44. LRR repeat units lie at residues 58-82 (EDAT…LKNL), 83-105 (RRVE…LPKY), 107-126 (KELH…SLSQ), 127-152 (IPYL…AFRD), 154-179 (IYLR…TIEE), 181-197 (RLDD…SLQD), 198-223 (LTNL…VFMN), 225-246 (VNLT…NLPG), 247-269 (TNLR…AFSY), and 270-293 (LRQL…VFDD). Asparagine 226 carries N-linked (GlcNAc...) asparagine glycosylation. The 52-residue stretch at 305–356 (NPWHCGCKMKWVRDWLQSLPLKVNVRGLMCQAPEKVRGMAIKDLNAELFDCK) folds into the LRRCT domain. Cysteines 309 and 334 form a disulfide. One can recognise a Fibronectin type-III domain in the interval 404–502 (PVRKIITIFV…ECIETETAPL (99 aa)). A helical membrane pass occupies residues 527-547 (LAAIIGGAVALVALALLALVC). Topologically, residues 548 to 647 (WYVHRNGALF…GIPDSDHSHS (100 aa)) are cytoplasmic. The segment at 620–647 (LYKNSHSESSSNRSYRDSGIPDSDHSHS) is disordered.

Post-translationally, N-glycosylated. In terms of processing, proteolytic cleavage in the juxtamembrane region gives rise to a soluble ectodomain. Cleavage is probably effected by a metalloprotease.

Its subcellular location is the cell membrane. It localises to the endoplasmic reticulum membrane. The protein localises to the cell junction. The protein resides in the focal adhesion. It is found in the secreted. Its subcellular location is the cell projection. It localises to the axon. The protein localises to the growth cone membrane. Functionally, modulates the structure and function of the apical ectodermal ridge (AER) that controls embryonic limb development. Functions in cell-cell adhesion, cell migration and axon guidance, exerting an attractive or repulsive role depending on its interaction partners. Plays a role in the spatial organization of brain neurons. Plays a role in vascular development. Plays a role in cell-cell adhesion via its interaction with latrophilins that are expressed at the surface of adjacent cells. Mediates axon attraction towards cells expressing NTN1. Mediates axon growth cone collapse and plays a repulsive role in neuron guidance via its interaction with UNC-5 family members. Plays a role in the regulation of the density of glutamaergic synapses. Plays a role in fibroblast growth factor-mediated signaling cascades. Required for normal morphogenesis during embryonic development, but not for normal embryonic patterning. The chain is Leucine-rich repeat transmembrane protein FLRT3 (FLRT3) from Gallus gallus (Chicken).